We begin with the raw amino-acid sequence, 1034 residues long: Condensin complex subunit 3 (1034 aa).

7 HEAT repeats span residues 95 to 132 (SPVNCLFNFLLQSHGASSMAVRFRVCQLINKLLVNLPE), 139 to 176 (DLFDKIHDAMLIRLKDRVPNVRIQAVLALARLQDPSDP), 178 to 213 (CPVSNAYVHLLENDSNPEVRRAVLTCIAPSAKSLPK), 242 to 279 (LTIAQRVKLLQQGLNDRSAAVKDVIQKKLIQAWLQYSE), 281 to 317 (DVLDLLHRLDVENSPEVSLSALNALFSVSPVGELVQN), 439 to 476 (TSLISSLAELLLFVLKDDDKRIQTVAEIISELREPIVT), and 618 to 655 (DFARQHLPLLLQILQLDEVKVKNSALNAVFDMLLLFGM). Polar residues predominate over residues 663 to 672 (TNPDDSQCKA). Positions 663 to 693 (TNPDDSQCKAQENADEDISEQEKPGSVDENL) are disordered. 3 HEAT repeats span residues 703 to 740 (ATVNGILHLFSGFLDSEIAEIRTETAEGLVKLMFSGRL), 785 to 823 (CFAEAFLPTLQTLFNAPASSPLADVDVANVAELLVDLTR), and 878 to 915 (ENSTDLLPLLDCAVEDVTDKVCERAIEKVRSQLRSGRE). Basic and acidic residues predominate over residues 909–949 (QLRSGREEHRVSKETEPQVSKETEDRTNLQENEEGKQKDEA). The tract at residues 909 to 1034 (QLRSGREEHR…LSKLLNEEAN (126 aa)) is disordered. Positions 964-984 (RGKATKGRRKGPAAAATRRKA) are enriched in basic residues. Over residues 985-999 (SKAEEAEAEMERQEE) the composition is skewed to basic and acidic residues.

This sequence belongs to the CND3 (condensin subunit 3) family. In terms of assembly, component of the condensin complex, which contains the XCAP-E/SMC2 and XCAP-C/SMC4 heterodimer, and three non SMC subunits that probably regulate the complex: XCAP-H/NCAPH, XCAP-D2/NCAPD2 and XCAP-G/NCAPG. Post-translationally, phosphorylated by cdk1. Its phosphorylation, as well as that of XCAP-D2 and XCAP-H subunits, activates the condensin complex and is required for chromosome condensation.

Its subcellular location is the nucleus. It localises to the cytoplasm. The protein localises to the chromosome. Regulatory subunit of the condensin complex, a complex required for conversion of interphase chromatin into mitotic-like condense chromosomes. The condensin complex probably introduces positive supercoils into relaxed DNA in the presence of type I topoisomerases and converts nicked DNA into positive knotted forms in the presence of type II topoisomerase. The polypeptide is Condensin complex subunit 3 (ncapg) (Xenopus laevis (African clawed frog)).